Consider the following 361-residue polypeptide: BBSome complex member bbs-5 (361 aa).

The protein belongs to the BBS5 family. In terms of assembly, part of BBSome complex, that contains at least bbs-1, bbs-2, bbs-4, bbs-5, osm-12, bbs-8/ttc-8 and bbs-9. Interacts with bbs-4 (via C-terminus); the interaction is direct.

The protein localises to the cell projection. Its subcellular location is the cilium membrane. It is found in the cytoplasm. It localises to the cytoskeleton. The protein resides in the cilium basal body. The protein localises to the microtubule organizing center. Its subcellular location is the centrosome. It is found in the centriolar satellite. In terms of biological role, component of the BBSome complex. The BBSome complex is thought to function as a coat complex required for sorting of specific membrane proteins to the primary cilia. The BBSome complex is required for ciliogenesis but is dispensable for centriolar satellite function. Required for BBSome complex ciliary localization but not for the proper complex assembly. Required, redundantly with bbs-4, for cilia biogenesis and both the assembly and movement of intraflagellar transport proteins along the ciliary axoneme. Plays a role in the removal of degraded mechanosensory receptors within the cilia. The protein is BBSome complex member bbs-5 of Caenorhabditis elegans.